Here is a 134-residue protein sequence, read N- to C-terminus: Arginine decarboxylase proenzyme (134 aa).

Ser82 functions as the Schiff-base intermediate with substrate; via pyruvic acid in the catalytic mechanism. Ser82 bears the Pyruvic acid (Ser); by autocatalysis mark. The Proton acceptor; for processing activity role is filled by His87. Cys102 functions as the Proton donor; for catalytic activity in the catalytic mechanism.

This sequence belongs to the prokaryotic AdoMetDC family. Type 1 subfamily. As to quaternary structure, heterooctamer of four alpha and four beta chains arranged as a tetramer of alpha/beta heterodimers. Pyruvate is required as a cofactor. Is synthesized initially as an inactive proenzyme. Formation of the active enzyme involves a self-maturation process in which the active site pyruvoyl group is generated from an internal serine residue via an autocatalytic post-translational modification. Two non-identical subunits are generated from the proenzyme in this reaction, and the pyruvate is formed at the N-terminus of the alpha chain, which is derived from the carboxyl end of the proenzyme. The post-translation cleavage follows an unusual pathway, termed non-hydrolytic serinolysis, in which the side chain hydroxyl group of the serine supplies its oxygen atom to form the C-terminus of the beta chain, while the remainder of the serine residue undergoes an oxidative deamination to produce ammonia and the pyruvoyl group blocking the N-terminus of the alpha chain.

It catalyses the reaction L-arginine + H(+) = agmatine + CO2. It functions in the pathway amine and polyamine biosynthesis; agmatine biosynthesis; agmatine from L-arginine: step 1/1. Its activity is regulated as follows. Highly competitively inhibited by L-argininamide and L-arginine methyl ester. Also inhibited by alpha-difluoromethylarginine. Is not stimulated by potassium chloride as observed for other decarboxylases. Specifically catalyzes the decarboxylation of L-arginine to agmatine. Is also able to decarboxylate L-canavanine, although less efficiently. Has no S-adenosylmethionine decarboxylase (AdoMetDC) activity. This Saccharolobus solfataricus (strain ATCC 35092 / DSM 1617 / JCM 11322 / P2) (Sulfolobus solfataricus) protein is Arginine decarboxylase proenzyme.